The primary structure comprises 690 residues: NF-kappa-B-repressing factor (690 aa).

The active repression domain stretch occupies residues 1–296; sequence MEKILHMAEG…FKHIIGEDLV (296 aa). Residues 25–45 carry the Nuclear localization signal motif; the sequence is KPSKGQKRYLSTYDGQNPPKK. Disordered stretches follow at residues 27–49, 65–85, and 133–160; these read SKGQKRYLSTYDGQNPPKKQAGS, SSSKAERQEDPYGPQTKDVNG, and YFDSGNPAPSSTSQQANCQPAPEPPPSQ. Lysine 68 is covalently cross-linked (Glycyl lysine isopeptide (Lys-Gly) (interchain with G-Cter in SUMO2)). Over residues 139–150 the composition is skewed to polar residues; it reads PAPSSTSQQANC. A DNA-binding region spans residues 296–388; that stretch reads VVCQIGMLSY…RVFLQDHCLA (93 aa). Residues 414-425 show a composition bias toward polar residues; it reads PTYPSVKSSQCH. The tract at residues 414–436 is disordered; the sequence is PTYPSVKSSQCHSGSSPKGSGKK. A Glycyl lysine isopeptide (Lys-Gly) (interchain with G-Cter in SUMO2) cross-link involves residue lysine 500. The region spanning 551–596 is the G-patch domain; sequence EDNIGNQLLRKMGWTGGGLGKSGEGIREPISVKEQHKREGLGLDVE. The 65-residue stretch at 600–664 folds into the R3H domain; sequence KIAKRDIEQI…DRYLVVGRKR (65 aa). Phosphoserine is present on serine 618. Glycyl lysine isopeptide (Lys-Gly) (interchain with G-Cter in SUMO2) cross-links involve residues lysine 666 and lysine 674.

In terms of assembly, interacts with NF-kappa-B. Interacts with XRN2. Interacts (via G-patch domain) with DHX15; promoting the RNA helicase activity of DHX15.

The protein resides in the nucleus. Its subcellular location is the nucleolus. Functionally, enhances the ATPase activity of DHX15 by acting like a brace that tethers mobile sections of DHX15 together, stabilizing a functional conformation with high RNA affinity of DHX15. Involved in the constitutive silencing of the interferon beta promoter, independently of the virus-induced signals, and in the inhibition of the basal and cytokine-induced iNOS promoter activity. Also involved in the regulation of IL-8 transcription. May also act as a DNA-binding transcription regulator: interacts with a specific negative regulatory element (NRE) 5'-AATTCCTCTGA-3' to mediate transcriptional repression of certain NK-kappa-B responsive genes. The polypeptide is NF-kappa-B-repressing factor (Nkrf) (Mus musculus (Mouse)).